Consider the following 446-residue polypeptide: Transcription factor Dp-2 (446 aa).

Thr2 carries the post-translational modification N-acetylthreonine. A Phosphoserine modification is found at Ser24. Residues 60-82 (PQMIISTPQRLTSSGSVLIGSPY) are interaction with CEBPA. The Nuclear localization signal signature appears at 103-118 (GDRKRARKFIDSDFSE). Ser122 carries the phosphoserine modification. A DNA-binding region spans residues 129–210 (GKGLRHFSMK…KKEIKWIGLP (82 aa)). Positions 176-210 (DQKNIRRRVYDALNVLMAMNIISKEKKEIKWIGLP) match the DEF box motif. The interval 219-292 (NLEIEKQRRI…RKTVIDCSIS (74 aa)) is dimerization. The DCB1 stretch occupies residues 229 to 261 (ERIKQKRAQLQELLLQQIAFKNLVQRNRQNEQQ). Positions 274 to 330 (LPFIIINTSRKTVIDCSISSDKFEYLFNFDNTFEIHDDIEVLKRMGMSFGLESGKCS) are DCB2. Residues 409 to 419 (SHQSSSAASHC) show a composition bias toward low complexity. Positions 409-446 (SHQSSSAASHCSESRGETPCSFNDEDEEDDEEDSSSPE) are disordered. Residues 431–446 (NDEDEEDDEEDSSSPE) are compositionally biased toward acidic residues.

This sequence belongs to the E2F/DP family. As to quaternary structure, component of the DRTF1/E2F transcription factor complex. Forms heterodimers with E2F family members. The complex can interact with hypophosphorylated retinoblastoma protein RB1 and related proteins (RBL1 and RBL2) that inhibit the E2F transactivation domain. During the cell cycle, RB becomes phosphorylated in mid-to-late G1 phase, detaches from the DRTF1/E2F complex rendering E2F transcriptionally active. Viral oncoproteins, notably E1A, T-antigen and HPV E7, are capable of sequestering RB protein, thus releasing the active complex. Interacts with GMCL. Component of the DREAM complex (also named LINC complex) at least composed of E2F4, E2F5, LIN9, LIN37, LIN52, LIN54, MYBL1, MYBL2, RBL1, RBL2, RBBP4, TFDP1 and TFDP2. The complex exists in quiescent cells where it represses cell cycle-dependent genes. It dissociates in S phase when LIN9, LIN37, LIN52 and LIN54 form a subcomplex that binds to MYBL2. The complex TFDP2:E2F1 interacts with CEBPA; the interaction prevents CEBPA binding to target genes promoters and represses its transcriptional activity. Ser-24 is probably phosphorylated by CDK2. High levels in heart and skeletal muscle. Also found in placenta, kidney, brain, lung and liver. The presence as well as the abundance of the different transcripts appear to vary significantly in different tissues and cell lines.

The protein localises to the nucleus. In terms of biological role, can stimulate E2F-dependent transcription. Binds DNA cooperatively with E2F family members through the E2 recognition site, 5'-TTTC[CG]CGC-3', found in the promoter region of a number of genes whose products are involved in cell cycle regulation or in DNA replication. The TFDP2:E2F complex functions in the control of cell-cycle progression from G1 to S phase. The E2F1:DP complex appears to mediate both cell proliferation and apoptosis. Blocks adipocyte differentiation by repressing CEBPA binding to its target gene promoters. This is Transcription factor Dp-2 (TFDP2) from Homo sapiens (Human).